Reading from the N-terminus, the 180-residue chain is Putative methyltransferase YrhH (180 aa).

Belongs to the methyltransferase superfamily.

The protein is Putative methyltransferase YrhH (yrhH) of Bacillus subtilis (strain 168).